A 213-amino-acid polypeptide reads, in one-letter code: Uridine kinase (213 aa).

15–22 (GASASGKS) is an ATP binding site.

It belongs to the uridine kinase family.

The protein resides in the cytoplasm. The catalysed reaction is uridine + ATP = UMP + ADP + H(+). It catalyses the reaction cytidine + ATP = CMP + ADP + H(+). It participates in pyrimidine metabolism; CTP biosynthesis via salvage pathway; CTP from cytidine: step 1/3. It functions in the pathway pyrimidine metabolism; UMP biosynthesis via salvage pathway; UMP from uridine: step 1/1. The chain is Uridine kinase from Proteus mirabilis (strain HI4320).